The following is a 261-amino-acid chain: Bidirectional sugar transporter SWEET1b (261 aa).

Over 1–6 (MEDLAK) the chain is Extracellular. A helical membrane pass occupies residues 7 to 27 (FLFGVSGNVIALFLFLSPVPT). Residues 7 to 95 (FLFGVSGNVI…VVFLVFASTH (89 aa)) enclose the MtN3/slv 1 domain. The Cytoplasmic portion of the chain corresponds to 28-42 (FWRIIRRKSTEDFSG). Residues 43–63 (VPYNMTLINCLLSAWYGLPFV) form a helical membrane-spanning segment. Residues 64–71 (SPNNILVS) lie on the Extracellular side of the membrane. Residues 72 to 92 (TINGAGAVIETAYVVVFLVFA) form a helical membrane-spanning segment. The Cytoplasmic segment spans residues 93–101 (STHKTRLRT). Residues 102 to 122 (LGLAAAVASVFAAVALVSLLA) form a helical membrane-spanning segment. At 123-129 (LHGQHRK) the chain is on the extracellular side. A helical transmembrane segment spans residues 130 to 150 (LLCGVAATVCSICMYASPLSI). A MtN3/slv 2 domain is found at 133–215 (GVAATVCSIC…VLYAIYRNNK (83 aa)). Residues 151–164 (MRLVIKTKSVEYMP) are Cytoplasmic-facing. A helical membrane pass occupies residues 165 to 185 (FLLSLAVFLCGTSWFIYGLLG). The Extracellular segment spans residues 186–189 (RDPF). Residues 190 to 210 (VTIPNGCGSFLGAVQLVLYAI) form a helical membrane-spanning segment. The Cytoplasmic segment spans residues 211 to 261 (YRNNKGAGGGSGGKQAGDDDVEMAEGRNNKVADGGAAEDDSTAGGKAGTEV). The segment at 218–261 (GGGSGGKQAGDDDVEMAEGRNNKVADGGAAEDDSTAGGKAGTEV) is disordered.

Belongs to the SWEET sugar transporter family. As to quaternary structure, forms homodimers.

It is found in the cell membrane. The catalysed reaction is D-glucose(out) = D-glucose(in). It carries out the reaction D-galactose(in) = D-galactose(out). Mediates transport of sugars across the plasma membrane. Can transport glucose and galactose, but not fructose, mannose and sucrose. This is Bidirectional sugar transporter SWEET1b (SWEET1B) from Oryza sativa subsp. indica (Rice).